The sequence spans 222 residues: Flagellar L-ring protein (222 aa).

The first 18 residues, 1–18 (MRRPGAAALAAAALALAG), serve as a signal peptide directing secretion. Residue C19 is the site of N-palmitoyl cysteine attachment. C19 carries S-diacylglycerol cysteine lipidation.

Belongs to the FlgH family. The basal body constitutes a major portion of the flagellar organelle and consists of four rings (L,P,S, and M) mounted on a central rod.

It is found in the cell outer membrane. The protein localises to the bacterial flagellum basal body. In terms of biological role, assembles around the rod to form the L-ring and probably protects the motor/basal body from shearing forces during rotation. This Burkholderia mallei (strain ATCC 23344) protein is Flagellar L-ring protein.